The following is a 213-amino-acid chain: Ras-related protein Rab-2 (213 aa).

GTP-binding residues include Thr-15, Gly-16, Gly-18, Lys-19, Ser-20, Cys-21, Gln-32, Pro-33, His-35, Thr-38, Gly-64, Asn-119, Asp-122, and Ala-150. Ser-20 is a Mg(2+) binding site. Residue Thr-38 participates in Mg(2+) binding. The interval Gln-190–Cys-213 is disordered. Residues Cys-212 and Cys-213 are each lipidated (S-geranylgeranyl cysteine).

It belongs to the small GTPase superfamily. Rab family. In terms of assembly, interacts (GTP-bound form) with Vps16A and Vps39; the interaction with Vps39 is probably direct.

Its subcellular location is the vesicle. The protein resides in the cytoplasmic vesicle. It localises to the cell projection. The protein localises to the axon. It is found in the presynapse. Its subcellular location is the presynaptic active zone. The protein resides in the golgi apparatus. It localises to the trans-Golgi network. The protein localises to the perikaryon. It is found in the autophagosome membrane. Its subcellular location is the autolysosome membrane. The enzyme catalyses GTP + H2O = GDP + phosphate + H(+). May be involved in bidirectional endoplasmic reticulum (ER) to Golgi trafficking. Together with Rab7 involved in promoting fusion of autophagosomes and endosomes with lysosomes, probably through recruitment of the HOPS tethering complex. Involved in biosynthetic transport to lysosomes. In larval motor neurons, mediates the biogenesis of presynaptic cargo vesicles and their long-range axonal trafficking to synaptic termini. Not involved in axonal trafficking of mitochondria. During vesicle biogenesis, active zone proteins (including brp/Bruchpilot) and synaptic vesicle proteins (including VGlut) are sorted from the trans-Golgi in a Rab2-dependent manner via, at least, two independent routes. Acts upstream of Arl8 during presynaptic precursor vesicle biogenesis. Associated with lysosomal marker positive presynaptic cargo vesicles during anterograde and retrograde axonal trafficking, probably while in its GTP-bound active state. Involved in the delivery of presynaptic cargos, but not presynapse assembly or active zone function at synaptic termini. Required for autophagocytosis-dependent remodeling of myofibrils and transverse-tubules (T-tubules) during metamorphosis. This Drosophila melanogaster (Fruit fly) protein is Ras-related protein Rab-2.